The following is a 248-amino-acid chain: 2,3-bisphosphoglycerate-dependent phosphoglycerate mutase (248 aa).

Residues 8-15 (RHGESTWN), 21-22 (TG), R60, 87-90 (ERHY), K98, 114-115 (RR), and 183-184 (GN) contribute to the substrate site. The active-site Tele-phosphohistidine intermediate is H9. E87 acts as the Proton donor/acceptor in catalysis.

It belongs to the phosphoglycerate mutase family. BPG-dependent PGAM subfamily. As to quaternary structure, homodimer.

The catalysed reaction is (2R)-2-phosphoglycerate = (2R)-3-phosphoglycerate. The protein operates within carbohydrate degradation; glycolysis; pyruvate from D-glyceraldehyde 3-phosphate: step 3/5. In terms of biological role, catalyzes the interconversion of 2-phosphoglycerate and 3-phosphoglycerate. This Ralstonia nicotianae (strain ATCC BAA-1114 / GMI1000) (Ralstonia solanacearum) protein is 2,3-bisphosphoglycerate-dependent phosphoglycerate mutase.